The primary structure comprises 170 residues: Lipoprotein signal peptidase (170 aa).

3 helical membrane passes run 12-32, 67-87, and 94-113; these read WYWIVVLVFIADQLSKQWVLS, WQRWLFTFVAVGFSILLSVWL, and MWRLNLAYTLVIGGALGNLI. Residues Asp123 and Asp141 contribute to the active site. The helical transmembrane segment at 133–153 threads the bilayer; the sequence is HFPAFNIADSAICIGAGLIIL.

Belongs to the peptidase A8 family.

Its subcellular location is the cell inner membrane. The enzyme catalyses Release of signal peptides from bacterial membrane prolipoproteins. Hydrolyzes -Xaa-Yaa-Zaa-|-(S,diacylglyceryl)Cys-, in which Xaa is hydrophobic (preferably Leu), and Yaa (Ala or Ser) and Zaa (Gly or Ala) have small, neutral side chains.. The protein operates within protein modification; lipoprotein biosynthesis (signal peptide cleavage). Its function is as follows. This protein specifically catalyzes the removal of signal peptides from prolipoproteins. In Shewanella piezotolerans (strain WP3 / JCM 13877), this protein is Lipoprotein signal peptidase.